A 169-amino-acid chain; its full sequence is Putative 3-methyladenine DNA glycosylase (169 aa).

The protein belongs to the DNA glycosylase MPG family.

The polypeptide is Putative 3-methyladenine DNA glycosylase (Wolbachia sp. subsp. Brugia malayi (strain TRS)).